Here is a 646-residue protein sequence, read N- to C-terminus: Threonine--tRNA ligase (646 aa).

The 61-residue stretch at 1 to 61 (MIKITFPDGS…NEDANFVLYK (61 aa)) folds into the TGS domain. The tract at residues 242–541 (DHRKIGKEMD…LIEHTAGKFP (300 aa)) is catalytic. Positions 337, 388, and 518 each coordinate Zn(2+).

It belongs to the class-II aminoacyl-tRNA synthetase family. As to quaternary structure, homodimer. Zn(2+) serves as cofactor.

The protein resides in the cytoplasm. It catalyses the reaction tRNA(Thr) + L-threonine + ATP = L-threonyl-tRNA(Thr) + AMP + diphosphate + H(+). Functionally, catalyzes the attachment of threonine to tRNA(Thr) in a two-step reaction: L-threonine is first activated by ATP to form Thr-AMP and then transferred to the acceptor end of tRNA(Thr). Also edits incorrectly charged L-seryl-tRNA(Thr). The protein is Threonine--tRNA ligase of Phocaeicola vulgatus (strain ATCC 8482 / DSM 1447 / JCM 5826 / CCUG 4940 / NBRC 14291 / NCTC 11154) (Bacteroides vulgatus).